Here is a 295-residue protein sequence, read N- to C-terminus: Apolipoprotein E (295 aa).

The signal sequence occupies residues 1 to 18 (MKVLWAALLVTFLAGCQA). 6 tandem repeats follow at residues 80-101 (TLMD…EQLS), 102-123 (PVAE…ARLG), 124-145 (ADME…AMLG), 146-167 (QSTE…KRLL), 193-211 (TVGS…AKLR), and 212-233 (ARME…EQVA). The interval 80–233 (TLMDETMKEL…RLDEVKEQVA (154 aa)) is 6 X 22 AA approximate tandem repeats. At M143 the chain carries Methionine sulfoxide. Position 147 is a phosphoserine (S147). Positions 158-168 (HLRKLRKRLLR) are LDL and other lipoprotein receptors binding. Residue 162 to 165 (LRKR) participates in heparin binding. The tract at residues 191-268 (AATVGSLASQ…SWFEPLVEDM (78 aa)) is lipid-binding and lipoprotein association. The tract at residues 244-295 (QQISLQAEAFQARLKSWFEPLVEDMQRQWAGLVEKVQAAVGASTAPVPSDNH) is homooligomerization. Residues 256-268 (RLKSWFEPLVEDM) are specificity for association with VLDL.

It belongs to the apolipoprotein A1/A4/E family. Homotetramer. May interact with ABCA1; functionally associated with ABCA1 in the biogenesis of HDLs. May interact with APP/A4 amyloid-beta peptide; the interaction is extremely stable in vitro but its physiological significance is unclear. May interact with MAPT. May interact with MAP2. In the cerebrospinal fluid, interacts with secreted SORL1. Interacts with PMEL; this allows the loading of PMEL luminal fragment on ILVs to induce fibril nucleation. APOE exists as multiple glycosylated and sialylated glycoforms within cells and in plasma. The extent of glycosylation and sialylation are tissue and context specific. Post-translationally, glycated in plasma VLDL. In terms of processing, phosphorylated by FAM20C in the extracellular medium.

The protein localises to the secreted. Its subcellular location is the extracellular space. It is found in the extracellular matrix. It localises to the extracellular vesicle. The protein resides in the endosome. The protein localises to the multivesicular body. Its function is as follows. APOE is an apolipoprotein, a protein associating with lipid particles, that mainly functions in lipoprotein-mediated lipid transport between organs via the plasma and interstitial fluids. APOE is a core component of plasma lipoproteins and is involved in their production, conversion and clearance. Apolipoproteins are amphipathic molecules that interact both with lipids of the lipoprotein particle core and the aqueous environment of the plasma. As such, APOE associates with chylomicrons, chylomicron remnants, very low density lipoproteins (VLDL) and intermediate density lipoproteins (IDL) but shows a preferential binding to high-density lipoproteins (HDL). It also binds a wide range of cellular receptors including the LDL receptor/LDLR, the LDL receptor-related proteins LRP1, LRP2 and LRP8 and the very low-density lipoprotein receptor/VLDLR that mediate the cellular uptake of the APOE-containing lipoprotein particles. Finally, APOE also has a heparin-binding activity and binds heparan-sulfate proteoglycans on the surface of cells, a property that supports the capture and the receptor-mediated uptake of APOE-containing lipoproteins by cells. A main function of APOE is to mediate lipoprotein clearance through the uptake of chylomicrons, VLDLs, and HDLs by hepatocytes. APOE is also involved in the biosynthesis by the liver of VLDLs as well as their uptake by peripheral tissues ensuring the delivery of triglycerides and energy storage in muscle, heart and adipose tissues. By participating in the lipoprotein-mediated distribution of lipids among tissues, APOE plays a critical role in plasma and tissues lipid homeostasis. APOE is also involved in two steps of reverse cholesterol transport, the HDLs-mediated transport of cholesterol from peripheral tissues to the liver, and thereby plays an important role in cholesterol homeostasis. First, it is functionally associated with ABCA1 in the biogenesis of HDLs in tissues. Second, it is enriched in circulating HDLs and mediates their uptake by hepatocytes. APOE also plays an important role in lipid transport in the central nervous system, regulating neuron survival and sprouting. This chain is Apolipoprotein E (APOE), found in Macaca mulatta (Rhesus macaque).